The following is a 661-amino-acid chain: DNA ligase (661 aa).

Residues 31-35 (DSGYD), 80-81 (SL), and Glu-109 contribute to the NAD(+) site. Lys-111 serves as the catalytic N6-AMP-lysine intermediate. NAD(+)-binding residues include Arg-132, Glu-167, Lys-283, and Lys-307. Residues Cys-401, Cys-404, Cys-419, and Cys-424 each coordinate Zn(2+). Residues 582-661 (AGEQLLQGKT…AGFLNLLGLS (80 aa)) form the BRCT domain.

It belongs to the NAD-dependent DNA ligase family. LigA subfamily. It depends on Mg(2+) as a cofactor. The cofactor is Mn(2+).

It catalyses the reaction NAD(+) + (deoxyribonucleotide)n-3'-hydroxyl + 5'-phospho-(deoxyribonucleotide)m = (deoxyribonucleotide)n+m + AMP + beta-nicotinamide D-nucleotide.. Its function is as follows. DNA ligase that catalyzes the formation of phosphodiester linkages between 5'-phosphoryl and 3'-hydroxyl groups in double-stranded DNA using NAD as a coenzyme and as the energy source for the reaction. It is essential for DNA replication and repair of damaged DNA. The sequence is that of DNA ligase from Syntrophomonas wolfei subsp. wolfei (strain DSM 2245B / Goettingen).